The primary structure comprises 254 residues: uncharacterized protein (254 aa).

A coiled-coil region spans residues 66–111 (DMVSEMNKRMDDLAARIVVLEDEKAELRRINQRLTEKVRDKDMEKA).

This is an uncharacterized protein from Ostreid herpesvirus 1 (isolate France) (OsHV-1).